The following is a 311-amino-acid chain: Probable deoxyhypusine synthase (311 aa).

Lys-284 (nucleophile) is an active-site residue.

It belongs to the deoxyhypusine synthase family. It depends on NAD(+) as a cofactor.

The catalysed reaction is [eIF5A protein]-L-lysine + spermidine = [eIF5A protein]-deoxyhypusine + propane-1,3-diamine. The protein operates within protein modification; eIF5A hypusination. Functionally, catalyzes the NAD-dependent oxidative cleavage of spermidine and the subsequent transfer of the butylamine moiety of spermidine to the epsilon-amino group of a specific lysine residue of the eIF-5A precursor protein to form the intermediate deoxyhypusine residue. The sequence is that of Probable deoxyhypusine synthase (dys) from Sulfurisphaera tokodaii (strain DSM 16993 / JCM 10545 / NBRC 100140 / 7) (Sulfolobus tokodaii).